Reading from the N-terminus, the 340-residue chain is Pesticidal crystal protein Cry15Aa (340 aa).

Residues Arg-318–Glu-340 are disordered.

In terms of biological role, promotes colloidosmotic lysis by binding to the midgut epithelial cells of lepidopteran larvae. The chain is Pesticidal crystal protein Cry15Aa (cry15Aa) from Bacillus thuringiensis subsp. thompsoni.